Here is a 511-residue protein sequence, read N- to C-terminus: Bifunctional purine biosynthesis protein PurH (511 aa).

The MGS-like domain maps to 1 to 145 (MKKRALVSVS…KNHKFVSVIV (145 aa)).

It belongs to the PurH family.

It catalyses the reaction (6R)-10-formyltetrahydrofolate + 5-amino-1-(5-phospho-beta-D-ribosyl)imidazole-4-carboxamide = 5-formamido-1-(5-phospho-D-ribosyl)imidazole-4-carboxamide + (6S)-5,6,7,8-tetrahydrofolate. The catalysed reaction is IMP + H2O = 5-formamido-1-(5-phospho-D-ribosyl)imidazole-4-carboxamide. It participates in purine metabolism; IMP biosynthesis via de novo pathway; 5-formamido-1-(5-phospho-D-ribosyl)imidazole-4-carboxamide from 5-amino-1-(5-phospho-D-ribosyl)imidazole-4-carboxamide (10-formyl THF route): step 1/1. It functions in the pathway purine metabolism; IMP biosynthesis via de novo pathway; IMP from 5-formamido-1-(5-phospho-D-ribosyl)imidazole-4-carboxamide: step 1/1. The protein is Bifunctional purine biosynthesis protein PurH of Bacillus cereus (strain ATCC 10987 / NRS 248).